The sequence spans 148 residues: uncharacterized protein (148 aa).

Over residues 36–45 (PGAPSAGPMS) the composition is skewed to low complexity. Residues 36–148 (PGAPSAGPMS…SGTAFFPGTT (113 aa)) are disordered. Polar residues predominate over residues 46-55 (DSNSKGSTPR).

This is an uncharacterized protein from Bovine leukemia virus (isolate Japanese BLV-1) (BLV).